Here is a 542-residue protein sequence, read N- to C-terminus: MSKIIAFDEEARRGLERGMNQLADAVKVTLGPKGRNVVLEKKWGAPTITNDGVSIAKEIELEDPYEKIGAELVKEVAKKTDDVAGDGTTTATVLAQALVREGLRNVAAGANPMGLKRGIEKAVEAVTEQLLGAAKEVTTKEQIAATAGISAGDASIGELIAEALDKVGKEGVITVEESNTFGLELELTEGMRFDKGYISPYFVTDAERQETELEDPYILILNSKISTVKDLLPLLEKVMQSGKPLVIVAEDVEGEALATLVVNKIRGTFKSVAVKAPGFGDRRKAMLGDIAILTGGQVISEEVGLKLDTADLDLLGRARKVVVTKDETTIVEGAGDADAIAGRVGQIRAEIERSDSDYDREKLQERLAKLAGGVAVIKAGAATEVELKERKHRIEDAVRNAKAAVEEGIVAGGGVALIQAGVLAFEKLELVGDEATGANIVKVAIEAPLKQIAINAGLEGGVVAEKVRNLPTGHGLNAATGEYVDLLGAGINDPVKVTRSALQNAASIAALFLTTEAVIADKPEKAAAAPAGGDGGMGGMDF.

Residues 29–32 (TLGP), 86–90 (DGTTT), G413, 477–479 (NAA), and D493 each bind ATP.

This sequence belongs to the chaperonin (HSP60) family. Forms a cylinder of 14 subunits composed of two heptameric rings stacked back-to-back. Interacts with the co-chaperonin GroES.

It is found in the cytoplasm. It carries out the reaction ATP + H2O + a folded polypeptide = ADP + phosphate + an unfolded polypeptide.. Its function is as follows. Together with its co-chaperonin GroES, plays an essential role in assisting protein folding. The GroEL-GroES system forms a nano-cage that allows encapsulation of the non-native substrate proteins and provides a physical environment optimized to promote and accelerate protein folding. The polypeptide is Chaperonin GroEL 2 (Kineococcus radiotolerans (strain ATCC BAA-149 / DSM 14245 / SRS30216)).